A 129-amino-acid chain; its full sequence is Allergen Bra j 1-E (129 aa).

Residues 28–47 are disordered; the sequence is KQAMQSGSGPQPQGPQQRPP. Over residues 32–47 the composition is skewed to low complexity; the sequence is QSGSGPQPQGPQQRPP.

Belongs to the 2S seed storage albumins family. As to quaternary structure, the mature protein consists of a small and a large chain linked by two disulfide bonds.

Its function is as follows. This is a 2S seed storage protein. The chain is Allergen Bra j 1-E from Brassica juncea (Indian mustard).